Reading from the N-terminus, the 250-residue chain is Histone H1.3 (250 aa).

2 disordered regions span residues 17–53 and 104–250; these read AASG…QMVD and QTKG…ATKK. Positions 27 to 42 are enriched in low complexity; that stretch reads KKAAATPKSKKSTAAP. Positions 44–118 constitute an H15 domain; sequence SHPPTQQMVD…GASGSFKLSR (75 aa). Residues 120 to 133 are compositionally biased toward basic and acidic residues; the sequence is AKKDAKPKASAVEK. Residues 138-161 are compositionally biased toward low complexity; the sequence is VNASAAAATKRSSSTSTTKKAAGA. Positions 174–191 are enriched in basic and acidic residues; it reads KNVEKKKADKEKAKDAKK. A compositionally biased stretch (low complexity) spans 192 to 234; sequence TGTIKAKLTTAKAKSSATKPKTPKPKTTSAKPKKVVSATTPKK. Over residues 235–250 the composition is skewed to basic residues; it reads TAVKKPKAKTASATKK.

This sequence belongs to the histone H1/H5 family.

Its subcellular location is the nucleus. The protein localises to the chromosome. Functionally, histones H1 are necessary for the condensation of nucleosome chains into higher-order structures. The sequence is that of Histone H1.3 (His1.3) from Drosophila virilis (Fruit fly).